A 576-amino-acid polypeptide reads, in one-letter code: DNA mismatch repair protein MutL (576 aa).

The protein belongs to the DNA mismatch repair MutL/HexB family.

Its function is as follows. This protein is involved in the repair of mismatches in DNA. It is required for dam-dependent methyl-directed DNA mismatch repair. May act as a 'molecular matchmaker', a protein that promotes the formation of a stable complex between two or more DNA-binding proteins in an ATP-dependent manner without itself being part of a final effector complex. The protein is DNA mismatch repair protein MutL of Chlamydia trachomatis serovar A (strain ATCC VR-571B / DSM 19440 / HAR-13).